The following is a 224-amino-acid chain: MEKKLSIAIDGPAAAGKSTVAKIVAEKKSYIYIDTGAMYRAITYAALQENVDLTDEEKLAELLKRTDIELITTKDGQKVFVNGTDVTEAIRTDEISNQVSIAAKHRSVREEMVKRQQQLGEKGGVVMDGRDIGTHVLPNAEVKIFLLASVEERAKRRYEENVKKGFDVNYETLIEEIARRDKLDSEREVSPLRKAEDALEIDTTSLSIQEVADKILEAVEQKSR.

11–19 lines the ATP pocket; the sequence is GPAAAGKST.

Belongs to the cytidylate kinase family. Type 1 subfamily.

Its subcellular location is the cytoplasm. It catalyses the reaction CMP + ATP = CDP + ADP. It carries out the reaction dCMP + ATP = dCDP + ADP. This is Cytidylate kinase (cmk) from Bacillus subtilis (strain 168).